The following is a 354-amino-acid chain: MKEQIQQLSAYQPGLSPRALKKEFGLDIDLHKLASNENLYGPSPKAKEAIKEHVDEVLYYPETGAPTLRKKIADTLNIDENRILFGAGLDEVILMISRAVLTPGDKIVTSQATFGQYYHNAIVESAEVVQVPLKENGQFDLDGILNEIDEDTALVWICNPNNPTGTYVTHEELEAFLEKVPSNVPVLVDEAYFEFVTADDFPDTLKLQEKFPNAFLMRTFSKAYGLAGLRVGYVIATKEAIHNYNIIRPPFNVGRLSEYAAVAAFEDQDYLKEIQKRNAEERAKFFEIPESKHFFDSQTNFIFVNTKRPKELYEALLKVGCITREFPIGVRITIGFPEQNDKMIEVLKNFDFEA.

Lys222 carries the post-translational modification N6-(pyridoxal phosphate)lysine.

This sequence belongs to the class-II pyridoxal-phosphate-dependent aminotransferase family. Histidinol-phosphate aminotransferase subfamily. In terms of assembly, homodimer. Requires pyridoxal 5'-phosphate as cofactor.

The catalysed reaction is L-histidinol phosphate + 2-oxoglutarate = 3-(imidazol-4-yl)-2-oxopropyl phosphate + L-glutamate. Its pathway is amino-acid biosynthesis; L-histidine biosynthesis; L-histidine from 5-phospho-alpha-D-ribose 1-diphosphate: step 7/9. This Staphylococcus carnosus (strain TM300) protein is Histidinol-phosphate aminotransferase.